Consider the following 261-residue polypeptide: Cytochrome c oxidase subunit 3 (261 aa).

Topologically, residues 1–15 are mitochondrial matrix; it reads MTHQTHAYHMVNPSP. Residues 16–34 form a helical membrane-spanning segment; sequence WPLTGALSALLMTSGLIMW. The Mitochondrial intermembrane portion of the chain corresponds to 35-40; that stretch reads FHFNSM. The chain crosses the membrane as a helical span at residues 41–66; sequence YLLMLGLTTNTLTMYQWWRDIVREST. At 67–72 the chain is on the mitochondrial matrix side; it reads FQGHHT. A helical membrane pass occupies residues 73–105; that stretch reads PIVQKGLRYGMILFIVSEVFFFAGFFWAFYHSS. Residues 106–128 lie on the Mitochondrial intermembrane side of the membrane; the sequence is LAPTPELGGCWPPTGITPLNPME. The chain crosses the membrane as a helical span at residues 129 to 152; it reads VPLLNTSVLLASGVSITWAHHSLM. Residues 153–155 lie on the Mitochondrial matrix side of the membrane; that stretch reads EGN. A helical transmembrane segment spans residues 156 to 183; the sequence is RKHMLQALFITISLGVYFTLLQASEYYE. The Mitochondrial intermembrane portion of the chain corresponds to 184–190; that stretch reads TPFTISD. Residues 191-223 traverse the membrane as a helical segment; the sequence is GIYGSTFFMATGFHGLHVIIGSTFLIVCFMRQL. Topologically, residues 224 to 232 are mitochondrial matrix; it reads KFHFTSNHH. A helical membrane pass occupies residues 233 to 256; the sequence is FGFEAAAWYWHFVDVVWLFLYVSI. Over 257–261 the chain is Mitochondrial intermembrane; sequence YWWGS.

The protein belongs to the cytochrome c oxidase subunit 3 family. As to quaternary structure, component of the cytochrome c oxidase (complex IV, CIV), a multisubunit enzyme composed of 14 subunits. The complex is composed of a catalytic core of 3 subunits MT-CO1, MT-CO2 and MT-CO3, encoded in the mitochondrial DNA, and 11 supernumerary subunits COX4I, COX5A, COX5B, COX6A, COX6B, COX6C, COX7A, COX7B, COX7C, COX8 and NDUFA4, which are encoded in the nuclear genome. The complex exists as a monomer or a dimer and forms supercomplexes (SCs) in the inner mitochondrial membrane with NADH-ubiquinone oxidoreductase (complex I, CI) and ubiquinol-cytochrome c oxidoreductase (cytochrome b-c1 complex, complex III, CIII), resulting in different assemblies (supercomplex SCI(1)III(2)IV(1) and megacomplex MCI(2)III(2)IV(2)).

The protein resides in the mitochondrion inner membrane. The enzyme catalyses 4 Fe(II)-[cytochrome c] + O2 + 8 H(+)(in) = 4 Fe(III)-[cytochrome c] + 2 H2O + 4 H(+)(out). Functionally, component of the cytochrome c oxidase, the last enzyme in the mitochondrial electron transport chain which drives oxidative phosphorylation. The respiratory chain contains 3 multisubunit complexes succinate dehydrogenase (complex II, CII), ubiquinol-cytochrome c oxidoreductase (cytochrome b-c1 complex, complex III, CIII) and cytochrome c oxidase (complex IV, CIV), that cooperate to transfer electrons derived from NADH and succinate to molecular oxygen, creating an electrochemical gradient over the inner membrane that drives transmembrane transport and the ATP synthase. Cytochrome c oxidase is the component of the respiratory chain that catalyzes the reduction of oxygen to water. Electrons originating from reduced cytochrome c in the intermembrane space (IMS) are transferred via the dinuclear copper A center (CU(A)) of subunit 2 and heme A of subunit 1 to the active site in subunit 1, a binuclear center (BNC) formed by heme A3 and copper B (CU(B)). The BNC reduces molecular oxygen to 2 water molecules using 4 electrons from cytochrome c in the IMS and 4 protons from the mitochondrial matrix. This chain is Cytochrome c oxidase subunit 3 (MT-CO3), found in Halichoerus grypus (Gray seal).